We begin with the raw amino-acid sequence, 510 residues long: GTPase Der (510 aa).

2 consecutive EngA-type G domains span residues 3 to 166 (PVVA…ATAL) and 220 to 393 (IKIA…ACAT). Residues 9–16 (GRPNVGKS), 56–60 (DTGGI), 118–121 (NKTD), 226–233 (GRPNVGKS), 273–277 (DTAGV), and 338–341 (NKWD) each bind GTP. The KH-like domain maps to 394–478 (QKTSTSMLTR…PIRIQFQEGN (85 aa)).

Belongs to the TRAFAC class TrmE-Era-EngA-EngB-Septin-like GTPase superfamily. EngA (Der) GTPase family. As to quaternary structure, associates with the 50S ribosomal subunit.

GTPase that plays an essential role in the late steps of ribosome biogenesis. This chain is GTPase Der, found in Haemophilus ducreyi (strain 35000HP / ATCC 700724).